The chain runs to 269 residues: Tryptophan synthase alpha chain (269 aa).

Active-site proton acceptor residues include Glu-56 and Asp-67.

It belongs to the TrpA family. In terms of assembly, tetramer of two alpha and two beta chains.

It catalyses the reaction (1S,2R)-1-C-(indol-3-yl)glycerol 3-phosphate + L-serine = D-glyceraldehyde 3-phosphate + L-tryptophan + H2O. Its pathway is amino-acid biosynthesis; L-tryptophan biosynthesis; L-tryptophan from chorismate: step 5/5. In terms of biological role, the alpha subunit is responsible for the aldol cleavage of indoleglycerol phosphate to indole and glyceraldehyde 3-phosphate. The polypeptide is Tryptophan synthase alpha chain (Mycobacterium ulcerans (strain Agy99)).